The primary structure comprises 118 residues: Putative pterin-4-alpha-carbinolamine dehydratase (118 aa).

It belongs to the pterin-4-alpha-carbinolamine dehydratase family.

The catalysed reaction is (4aS,6R)-4a-hydroxy-L-erythro-5,6,7,8-tetrahydrobiopterin = (6R)-L-erythro-6,7-dihydrobiopterin + H2O. This is Putative pterin-4-alpha-carbinolamine dehydratase from Pseudomonas putida (strain GB-1).